Consider the following 407-residue polypeptide: UPF0597 protein NAMH_0191 (407 aa).

Belongs to the UPF0597 family.

In Nautilia profundicola (strain ATCC BAA-1463 / DSM 18972 / AmH), this protein is UPF0597 protein NAMH_0191.